Here is a 276-residue protein sequence, read N- to C-terminus: NAD-capped RNA hydrolase NudC (276 aa).

Substrate is bound at residue arginine 82. Zn(2+) is bound by residues cysteine 112 and cysteine 115. Substrate is bound at residue glutamate 125. Residues cysteine 130 and cysteine 133 each contribute to the Zn(2+) site. Tyrosine 138 serves as a coordination point for substrate. One can recognise a Nudix hydrolase domain in the interval 139 to 262 (PRISPSMIVL…SIARYLIDLY (124 aa)). Positions 172, 188, and 192 each coordinate a divalent metal cation. Positions 173 to 194 (GFAEPGESAEDCLVREVREEVA) match the Nudix box motif. 206-213 (QCWPFPHS) serves as a coordination point for substrate. Glutamate 233 provides a ligand contact to a divalent metal cation. Alanine 255 lines the substrate pocket.

It belongs to the Nudix hydrolase family. NudC subfamily. In terms of assembly, homodimer. The cofactor is Mg(2+). It depends on Mn(2+) as a cofactor. Zn(2+) serves as cofactor.

The enzyme catalyses a 5'-end NAD(+)-phospho-ribonucleoside in mRNA + H2O = a 5'-end phospho-adenosine-phospho-ribonucleoside in mRNA + beta-nicotinamide D-ribonucleotide + 2 H(+). The catalysed reaction is NAD(+) + H2O = beta-nicotinamide D-ribonucleotide + AMP + 2 H(+). It catalyses the reaction NADH + H2O = reduced beta-nicotinamide D-ribonucleotide + AMP + 2 H(+). MRNA decapping enzyme that specifically removes the nicotinamide adenine dinucleotide (NAD) cap from a subset of mRNAs by hydrolyzing the diphosphate linkage to produce nicotinamide mononucleotide (NMN) and 5' monophosphate mRNA. The NAD-cap is present at the 5'-end of some mRNAs and stabilizes RNA against 5'-processing. Has preference for mRNAs with a 5'-end purine. Catalyzes the hydrolysis of a broad range of dinucleotide pyrophosphates. The sequence is that of NAD-capped RNA hydrolase NudC from Pseudomonas putida (strain W619).